A 105-amino-acid polypeptide reads, in one-letter code: Small ribosomal subunit protein uS17 (105 aa).

Belongs to the universal ribosomal protein uS17 family. As to quaternary structure, part of the 30S ribosomal subunit. Contacts protein S12.

In terms of biological role, one of the primary rRNA binding proteins, it binds directly to 16S rRNA where it helps nucleate assembly of the platform and body of the 30S subunit by bringing together and stabilizing interactions between several different RNA helices. The combined cluster of proteins S8, S12 and S17 appears to hold together the shoulder and platform of the 30S subunit. The polypeptide is Small ribosomal subunit protein uS17 (Thermus thermophilus (strain ATCC 27634 / DSM 579 / HB8)).